The chain runs to 128 residues: Large ribosomal subunit protein uL24 (128 aa).

Belongs to the universal ribosomal protein uL24 family. As to quaternary structure, part of the 50S ribosomal subunit.

Its function is as follows. One of two assembly initiator proteins, it binds directly to the 5'-end of the 23S rRNA, where it nucleates assembly of the 50S subunit. Functionally, located at the polypeptide exit tunnel on the outside of the subunit. This Pyrobaculum calidifontis (strain DSM 21063 / JCM 11548 / VA1) protein is Large ribosomal subunit protein uL24.